The following is a 340-amino-acid chain: N(4)-(Beta-N-acetylglucosaminyl)-L-asparaginase (340 aa).

The first 45 residues, 1-45 (MRIIYKQQTMNNNRRDFIKKLGIATAAIAINPLEAKNLLDTSEPK), serve as a signal peptide directing secretion. Catalysis depends on T197, which acts as the Nucleophile. Substrate is bound by residues 225-228 (RVGD) and 248-251 (TGHG).

The protein belongs to the Ntn-hydrolase family. As to quaternary structure, heterotetramer of two alpha and two beta chains arranged as a dimer of alpha/beta heterodimers. In terms of processing, cleaved into an alpha and beta chain by autocatalysis; this activates the enzyme. The N-terminal residue of the beta subunit is responsible for the nucleophile hydrolase activity.

The protein resides in the periplasm. It catalyses the reaction N(4)-(beta-N-acetyl-D-glucosaminyl)-L-asparagine + H2O = N-acetyl-beta-D-glucosaminylamine + L-aspartate + H(+). Cleaves the GlcNAc-Asn bond which joins oligosaccharides to the peptide of asparagine-linked glycoproteins. Requires that the glycosylated asparagine moiety is not substituted on its N-(R1) and C- (R2) terminus. The chain is N(4)-(Beta-N-acetylglucosaminyl)-L-asparaginase from Elizabethkingia miricola (Chryseobacterium miricola).